The primary structure comprises 86 residues: Small ribosomal subunit protein bS20 (86 aa).

The tract at residues 1–25 is disordered; that stretch reads MANIKSQQKRNRTNERARLRNKAVK.

It belongs to the bacterial ribosomal protein bS20 family.

Binds directly to 16S ribosomal RNA. The protein is Small ribosomal subunit protein bS20 of Mycobacterium bovis (strain ATCC BAA-935 / AF2122/97).